Reading from the N-terminus, the 451-residue chain is Glycine--tRNA ligase (451 aa).

Substrate-binding residues include arginine 94 and glutamate 164. ATP is bound by residues 196–198 (RNE), 206–211 (FRTREF), 281–282 (EL), and 325–328 (GVER). Position 211-215 (211-215 (FEQME)) interacts with substrate. 321 to 325 (EPSVG) contributes to the substrate binding site.

The protein belongs to the class-II aminoacyl-tRNA synthetase family. As to quaternary structure, homodimer.

It is found in the cytoplasm. The catalysed reaction is tRNA(Gly) + glycine + ATP = glycyl-tRNA(Gly) + AMP + diphosphate. Catalyzes the attachment of glycine to tRNA(Gly). This Mesoplasma florum (strain ATCC 33453 / NBRC 100688 / NCTC 11704 / L1) (Acholeplasma florum) protein is Glycine--tRNA ligase.